The following is a 1025-amino-acid chain: Transcription factor tau 131 kDa subunit (1025 aa).

Basic and acidic residues predominate over residues 1 to 26 (MAAGKLKKEQQNQSAERESADTGKVN). The tract at residues 1 to 71 (MAAGKLKKEQ…EDEYNSERDS (71 aa)) is disordered. The span at 46–65 (DEEYDDEDVPHDLQLSEDEY) shows a compositional bias: acidic residues. TPR repeat units lie at residues 128–161 (VAQLLSQANEAFVRNDLQVAERLFNEVIKKDARN), 162–195 (FAAYETLGDIYQLQGRLNDCCNSWFLAAHLNASD), 196–229 (WEFWKIVAILSADLDHVRQAIYCFSRVISLNPME), 230–263 (WESIYRRSMLYKKTGQLARALDGFQRLYMYNPYD), and 264–297 (ANILRELAILYVDYDRIEDSIELYMKVFNANVER). Residues 128–569 (VAQLLSQANE…VDVVEMRKHQ (442 aa)) are sufficient to bind BDP1. The interval 309–334 (LDSSDEESAAEGEDADEKEPLEQDED) is disordered. Position 311 is a phosphoserine (serine 311). Residues 311–325 (SSDEESAAEGEDADE) are compositionally biased toward acidic residues. TPR repeat units follow at residues 432–465 (IDIRVRLGLLRLNTDNLVEALNHFQCLYDETFSD), 467–501 (ADLYFEAATALTRAEKYKEAIDFFTPLLSLEEWRT), 502–535 (TDVFKPLARCYKEIESYETAKEFYELAIKSEPDD), 536–569 (LDIRVSLAEVYYRLNDPETFKHMLVDVVEMRKHQ), 875–908 (PYLYYIYAVLLYSSRGFLSALQYLTRLEEDIPDD), and 959–992 (QEADYNLGRAFHLIGLVSIAIEYYNRVLENYDDG).

Component of the TFIIIC complex composed of TFC1, TFC3, TFC4, TFC6, TFC7 and TFC8. The subunits are organized in two globular domains, tauA and tauB, connected by a proteolysis-sensitive and flexible linker. Interacts with TFC1, TFC3, TFC6, TFIIIB subunits BRF1 and BDP1, and with RNA polymerase III subunit RPC10. Post-translationally, phosphorylated.

It is found in the nucleus. Its function is as follows. TFIIIC mediates tRNA and 5S RNA gene activation by binding to intragenic promoter elements. Upstream of the transcription start site, TFIIIC assembles the initiation complex TFIIIB-TFIIIC-tDNA, which is sufficient for RNA polymerase III recruitment and function. Part of the tauA domain of TFIIIC that binds boxA DNA promoter sites of tRNA and similar genes. TFC4 is the TFIIIB-assembling subunit of TFIIIC and essential for viability. The chain is Transcription factor tau 131 kDa subunit (TFC4) from Saccharomyces cerevisiae (strain ATCC 204508 / S288c) (Baker's yeast).